We begin with the raw amino-acid sequence, 118 residues long: DNA-binding protein inhibitor ID-3-A (118 aa).

The bHLH domain occupies S32–L84.

Homodimer. Heterodimer with other HLH proteins. Interacts (via HLH domain) with the bHLH protein hes4/hairy2 (via Orange domain). Interacts with stat3. In terms of tissue distribution, at gastrula stage, expressed in all three germ layers, but becomes localized to discrete domains of the developing nervous system during neurulation, including the anterior neural plate, cement gland, eye anlagen, otic placode and both cranial and trunk premigratory and early migratory neural crest cells. Also expressed in the most dorsal and ventral portions of the myotome, the developing heart and anterior blood islets, and in the tail fin mesenchyme. Expressed at a low level in limbs, with expression decreasing as limbs develop, but expressed at a high level in blastemas (regenerated limbs), where expression is localized to both the blastermal epidermis and mesenchyme. Widely expressed in adults including the liver and heart.

Its subcellular location is the nucleus. Transcriptional regulator (lacking a basic DNA binding domain) which negatively regulates the basic helix-loop-helix (bHLH) transcription factors by forming heterodimers and inhibiting their DNA binding and transcriptional activity. Influences cell fate decisions in the embryo by sequestering and blocking the activity of the bHLH transcription factors that control these decisions. Inhibits the binding of myogenic bHLH-containing complexes to E-box DNA, thereby preventing activation of muscle-specific target genes. Also inhibits the activity of neurogenic factor neurod1/neuroD. Plays a role in cell cycle progression and survival of neural crest progenitors; binding to either hes4-B/hairy2b or stat3 blocks the formation of transcription factor complexes and the repressor function of hes4-B/hairy2B, to allow neural crest progenitors to differentiate. May play a role in the regulation of the circadian rhythm. This Xenopus laevis (African clawed frog) protein is DNA-binding protein inhibitor ID-3-A (id3-a).